A 979-amino-acid polypeptide reads, in one-letter code: Translation initiation factor IF-2 (979 aa).

A compositionally biased stretch (basic and acidic residues) spans 50 to 77; that stretch reads LKRSHGQSDDSARKKITLTKRETSEIRQ. The interval 50–385 is disordered; the sequence is LKRSHGQSDD…GKHNADDARS (336 aa). Residues 78–87 are compositionally biased toward polar residues; the sequence is SDSTGKTRTV. Basic and acidic residues-rich tracts occupy residues 98 to 109, 121 to 142, and 149 to 173; these read IKRDDVESHGDG, EEVRRDEEQRREQAEALARQEA, and EAAEREEAERRAKQEALEAEQRRQA. The segment covering 174–192 has biased composition (low complexity); it reads ELLAQKAAEEAAAAQAAAD. Basic and acidic residues-rich tracts occupy residues 196-211, 219-263, and 280-291; these read ETAREKAEEDKARLAT, NADD…EAEA, and PSERKAEEKKAE. Over residues 317–327 the composition is skewed to low complexity; that stretch reads APAATTTTAAA. Residues 351 to 368 are compositionally biased toward gly residues; it reads GGGLKTRGDSSGGVGGWR. The tr-type G domain maps to 479–646; the sequence is PRPPVVTVMG…NVLLQAEVLE (168 aa). The interval 488–495 is G1; sequence GHVDHGKT. GTP is bound at residue 488-495; the sequence is GHVDHGKT. The segment at 513 to 517 is G2; sequence GITQH. The interval 534–537 is G3; the sequence is DTPG. Residues 534-538 and 588-591 each bind GTP; these read DTPGH and TKVD. The G4 stretch occupies residues 588–591; sequence TKVD. A G5 region spans residues 624–626; it reads SAK.

It belongs to the TRAFAC class translation factor GTPase superfamily. Classic translation factor GTPase family. IF-2 subfamily.

The protein resides in the cytoplasm. Its function is as follows. One of the essential components for the initiation of protein synthesis. Protects formylmethionyl-tRNA from spontaneous hydrolysis and promotes its binding to the 30S ribosomal subunits. Also involved in the hydrolysis of GTP during the formation of the 70S ribosomal complex. This is Translation initiation factor IF-2 from Cupriavidus metallidurans (strain ATCC 43123 / DSM 2839 / NBRC 102507 / CH34) (Ralstonia metallidurans).